A 108-amino-acid polypeptide reads, in one-letter code: Circadian clock oscillator protein KaiB (108 aa).

Belongs to the KaiB family. As to quaternary structure, homodimer, interacts with KaiC. The KaiABC complex composition changes during the circadian cycle to control KaiC phosphorylation. Complexes KaiC(6), KaiA(2-4):KaiC(6), KaiB(6):KaiC(6) and KaiC(6):KaiB(6):KaiA(12) are among the most important forms, many form cooperatively. Undergoes a major conformational rearrangment; in the free state forms homotetramers as a dimer of dimers. When bound to the CI domain of KaiC switches to a monomeric thioredoxin-fold (KaiB(fs)). KaiB(fs) binds CikA, leading it to dephosphorylate phospho-RpaA.

Functionally, key component of the KaiABC oscillator complex, which constitutes the main circadian regulator in cyanobacteria. Complex composition changes during the circadian cycle to control KaiC phosphorylation. KaiA stimulates KaiC autophosphorylation, while KaiB sequesters KaiA, leading to KaiC autodephosphorylation. Phospho-Ser-431 KaiC accumulation triggers binding of KaiB to form the KaiB(6):KaiC(6) complex, leading to changes in output regulators CikA and SasA. KaiB switches to a thioredoxin-like fold (KaiB(fs)) when bound to KaiC. KaiB(6):KaiC(6) formation exposes a site for KaiA binding that sequesters KaiA from KaiC, making the KaiC(6):KaiB(6):KaiA(12) complex that results in KaiC autodephosphorylation. Its function is as follows. A metamorphic protein which reversibly switches between an inactive tetrameric fold and a rare, thioredoxin-like monomeric fold (KaiB(fs)). KaiB(fs) binds phospho-KaiC, KaiA and CikA. KaiA and CikA compete for binding to KaiB(fs), and KaiB(fs) and SasA compete for binding to KaiC, thus the clock oscillator and output signal pathway are tightly coupled. This is Circadian clock oscillator protein KaiB from Nostoc sp. (strain PCC 7120 / SAG 25.82 / UTEX 2576).